The chain runs to 565 residues: Ubiquitin carboxyl-terminal hydrolase 21 (565 aa).

Basic and acidic residues-rich tracts occupy residues M1 to E14 and P58 to R70. The segment at M1 to G128 is disordered. The segment covering G71 to P81 has biased composition (low complexity). The span at S104–S116 shows a compositional bias: polar residues. Positions E134–R152 match the Nuclear export signal motif. In terms of domain architecture, USP spans V212 to M558. Catalysis depends on C221, which acts as the Nucleophile. A disordered region spans residues A324–P347. Zn(2+)-binding residues include C384, C387, C437, and C440. Catalysis depends on H518, which acts as the Proton acceptor.

Belongs to the peptidase C19 family. USP21 subfamily. Interacts with BEND3.

It is found in the cytoplasm. The protein resides in the nucleus. The enzyme catalyses Thiol-dependent hydrolysis of ester, thioester, amide, peptide and isopeptide bonds formed by the C-terminal Gly of ubiquitin (a 76-residue protein attached to proteins as an intracellular targeting signal).. Its function is as follows. Deubiquitinates histone H2A, a specific tag for epigenetic transcriptional repression, thereby acting as a coactivator. Deubiquitination of histone H2A releaves the repression of di- and trimethylation of histone H3 at 'Lys-4', resulting in regulation of transcriptional initiation. Regulates gene expression via histone H2A deubiquitination. Deubiquitinates BAZ2A/TIP5 leading to its stabilization. Also capable of removing NEDD8 from NEDD8 conjugates but has no effect on Sentrin-1 conjugates. Also acts as a negative regulator of the ribosome quality control (RQC) by mediating deubiquitination of 40S ribosomal proteins RPS10/eS10 and RPS20/uS10, thereby antagonizing ZNF598-mediated 40S ubiquitination. The chain is Ubiquitin carboxyl-terminal hydrolase 21 (Usp21) from Rattus norvegicus (Rat).